The chain runs to 684 residues: Probable phosphoenolpyruvate synthase (684 aa).

Residue H424 is the Tele-phosphohistidine intermediate of the active site. 3 residues coordinate substrate: R517, R564, and E661. E661 is a binding site for Mg(2+).

This sequence belongs to the PEP-utilizing enzyme family. It depends on Mg(2+) as a cofactor.

It catalyses the reaction pyruvate + ATP + H2O = phosphoenolpyruvate + AMP + phosphate + 2 H(+). It participates in carbohydrate biosynthesis; gluconeogenesis. Catalyzes the phosphorylation of pyruvate to phosphoenolpyruvate. This chain is Probable phosphoenolpyruvate synthase (ppsA), found in Methanothermobacter thermautotrophicus (strain ATCC 29096 / DSM 1053 / JCM 10044 / NBRC 100330 / Delta H) (Methanobacterium thermoautotrophicum).